Consider the following 178-residue polypeptide: uncharacterized protein (178 aa).

This is an uncharacterized protein from Bacillus subtilis (strain 168).